The primary structure comprises 411 residues: Acetylornithine aminotransferase (411 aa).

Pyridoxal 5'-phosphate is bound by residues 107–108 (GT) and Phe-141. Arg-144 is a N(2)-acetyl-L-ornithine binding site. Pyridoxal 5'-phosphate is bound at residue 227–230 (DEIQ). The residue at position 256 (Lys-256) is an N6-(pyridoxal phosphate)lysine. N(2)-acetyl-L-ornithine is bound at residue Thr-284. Thr-285 lines the pyridoxal 5'-phosphate pocket.

This sequence belongs to the class-III pyridoxal-phosphate-dependent aminotransferase family. ArgD subfamily. Homodimer. The cofactor is pyridoxal 5'-phosphate.

The protein localises to the cytoplasm. It carries out the reaction N(2)-acetyl-L-ornithine + 2-oxoglutarate = N-acetyl-L-glutamate 5-semialdehyde + L-glutamate. The protein operates within amino-acid biosynthesis; L-arginine biosynthesis; N(2)-acetyl-L-ornithine from L-glutamate: step 4/4. The sequence is that of Acetylornithine aminotransferase from Xylella fastidiosa (strain 9a5c).